Reading from the N-terminus, the 209-residue chain is Small ribosomal subunit protein uS4 (209 aa).

Positions 99–164 (TRLDNVVYRM…IPRVQELKEL (66 aa)) constitute an S4 RNA-binding domain.

It belongs to the universal ribosomal protein uS4 family. Part of the 30S ribosomal subunit. Contacts protein S5. The interaction surface between S4 and S5 is involved in control of translational fidelity.

Functionally, one of the primary rRNA binding proteins, it binds directly to 16S rRNA where it nucleates assembly of the body of the 30S subunit. In terms of biological role, with S5 and S12 plays an important role in translational accuracy. This is Small ribosomal subunit protein uS4 from Natranaerobius thermophilus (strain ATCC BAA-1301 / DSM 18059 / JW/NM-WN-LF).